A 503-amino-acid chain; its full sequence is ATP synthase subunit alpha, chloroplastic (503 aa).

170 to 177 (GDRQTGKT) provides a ligand contact to ATP.

The protein belongs to the ATPase alpha/beta chains family. F-type ATPases have 2 components, CF(1) - the catalytic core - and CF(0) - the membrane proton channel. CF(1) has five subunits: alpha(3), beta(3), gamma(1), delta(1), epsilon(1). CF(0) has four main subunits: a, b, b' and c.

It is found in the plastid. The protein localises to the chloroplast thylakoid membrane. The catalysed reaction is ATP + H2O + 4 H(+)(in) = ADP + phosphate + 5 H(+)(out). Its function is as follows. Produces ATP from ADP in the presence of a proton gradient across the membrane. The alpha chain is a regulatory subunit. In Thalassiosira pseudonana (Marine diatom), this protein is ATP synthase subunit alpha, chloroplastic.